Here is a 601-residue protein sequence, read N- to C-terminus: Arginine--tRNA ligase (601 aa).

Residues Ala-135 to His-145 carry the 'HIGH' region motif.

The protein belongs to the class-I aminoacyl-tRNA synthetase family. As to quaternary structure, monomer.

The protein localises to the cytoplasm. The catalysed reaction is tRNA(Arg) + L-arginine + ATP = L-arginyl-tRNA(Arg) + AMP + diphosphate. This is Arginine--tRNA ligase from Gloeobacter violaceus (strain ATCC 29082 / PCC 7421).